We begin with the raw amino-acid sequence, 162 residues long: NADH-quinone oxidoreductase subunit I (162 aa).

4Fe-4S ferredoxin-type domains lie at 52–82 (LRRY…IEAG) and 93–122 (TRYD…EGPN). [4Fe-4S] cluster-binding residues include C62, C65, C68, C72, C102, C105, C108, and C112.

The protein belongs to the complex I 23 kDa subunit family. In terms of assembly, NDH-1 is composed of 14 different subunits. Subunits NuoA, H, J, K, L, M, N constitute the membrane sector of the complex. The cofactor is [4Fe-4S] cluster.

The protein localises to the cell inner membrane. It carries out the reaction a quinone + NADH + 5 H(+)(in) = a quinol + NAD(+) + 4 H(+)(out). Its function is as follows. NDH-1 shuttles electrons from NADH, via FMN and iron-sulfur (Fe-S) centers, to quinones in the respiratory chain. The immediate electron acceptor for the enzyme in this species is believed to be ubiquinone. Couples the redox reaction to proton translocation (for every two electrons transferred, four hydrogen ions are translocated across the cytoplasmic membrane), and thus conserves the redox energy in a proton gradient. This chain is NADH-quinone oxidoreductase subunit I, found in Methylobacterium nodulans (strain LMG 21967 / CNCM I-2342 / ORS 2060).